The sequence spans 158 residues: Oocyte-secreted protein 2 (158 aa).

A signal peptide spans 1–17; it reads MALEVLMLLAVLIWTGA.

This sequence belongs to the PLAC1 family. Highly expressed in oocytes.

It localises to the secreted. The protein localises to the cytoplasm. Involved in oocyte maturation. The sequence is that of Oocyte-secreted protein 2 (OOSP2) from Homo sapiens (Human).